A 321-amino-acid polypeptide reads, in one-letter code: Probable arabinan endo-1,5-alpha-L-arabinosidase A (321 aa).

A signal peptide spans 1–19 (MSASVFVVVASCLAALAHG). Asp-34 serves as the catalytic Proton acceptor. Residue Glu-200 is the Proton donor of the active site.

This sequence belongs to the glycosyl hydrolase 43 family.

It is found in the secreted. It carries out the reaction Endohydrolysis of (1-&gt;5)-alpha-arabinofuranosidic linkages in (1-&gt;5)-arabinans.. The protein operates within glycan metabolism; L-arabinan degradation. Functionally, endo-1,5-alpha-L-arabinanase involved in degradation of pectin. Its preferred substrate is linear 1,5-alpha-L-arabinan. This is Probable arabinan endo-1,5-alpha-L-arabinosidase A (abnA) from Aspergillus fumigatus (strain ATCC MYA-4609 / CBS 101355 / FGSC A1100 / Af293) (Neosartorya fumigata).